A 306-amino-acid polypeptide reads, in one-letter code: Plant-type L-asparaginase (306 aa).

Catalysis depends on threonine 176, which acts as the Nucleophile. Residues 203 to 206 (RVGD) and 225 to 228 (TGLG) each bind substrate.

This sequence belongs to the Ntn-hydrolase family. In terms of assembly, heterotetramer of two alpha and two beta chains arranged as a dimer of alpha/beta heterodimers. The uncleaved protein forms homodimers. Autocleaved. Generates the alpha and beta subunits. The N-terminal residue of the beta subunit is thought to be responsible for the nucleophile hydrolase activity. Predominantly produced in the uncleaved form when gene expression is induced at 37 degrees Celsius with 0.5 mM IPTG. When produced at 42 degrees Celsius without adding IPTG, approximately 90% of the protein is found in the cleaved form, while the remaining 10% is observed as uncleaved precursor. Undergoes complete auto-cleavage within 24 hours at 37 degrees Celsius.

The enzyme catalyses L-asparagine + H2O = L-aspartate + NH4(+). Undergoes auto-cleavage in a temperature-dependent and glycine-independent manner. Metal ions and EDTA do not have any significant effect on enzyme activity, indicating that activity is metal-independent. Its function is as follows. Catalyzes the hydrolysis of L-asparagine into L-aspartate and ammonia. Also displays D-asparaginase activity, which is about 10% of the L-asparaginase activity. Does not exhibit glutaminase activity. This chain is Plant-type L-asparaginase, found in Thermococcus kodakarensis (strain ATCC BAA-918 / JCM 12380 / KOD1) (Pyrococcus kodakaraensis (strain KOD1)).